The sequence spans 350 residues: Ketol-acid reductoisomerase (NADP(+)) (350 aa).

Residues 4–187 (VSITTDYSRM…GGARANIIKT (184 aa)) enclose the KARI N-terminal Rossmann domain. Residues 30–33 (YGSQ), Arg53, Thr58, and 88–91 (DMVQ) contribute to the NADP(+) site. His113 is a catalytic residue. Gly139 is an NADP(+) binding site. Residues 188-333 (TFKEETETDL…KQLRAKMVWL (146 aa)) enclose the KARI C-terminal knotted domain. Mg(2+) is bound by residues Asp196, Glu200, Glu232, and Glu236. Ser257 provides a ligand contact to substrate.

Belongs to the ketol-acid reductoisomerase family. It depends on Mg(2+) as a cofactor.

The catalysed reaction is (2R)-2,3-dihydroxy-3-methylbutanoate + NADP(+) = (2S)-2-acetolactate + NADPH + H(+). It carries out the reaction (2R,3R)-2,3-dihydroxy-3-methylpentanoate + NADP(+) = (S)-2-ethyl-2-hydroxy-3-oxobutanoate + NADPH + H(+). It participates in amino-acid biosynthesis; L-isoleucine biosynthesis; L-isoleucine from 2-oxobutanoate: step 2/4. Its pathway is amino-acid biosynthesis; L-valine biosynthesis; L-valine from pyruvate: step 2/4. Involved in the biosynthesis of branched-chain amino acids (BCAA). Catalyzes an alkyl-migration followed by a ketol-acid reduction of (S)-2-acetolactate (S2AL) to yield (R)-2,3-dihydroxy-isovalerate. In the isomerase reaction, S2AL is rearranged via a Mg-dependent methyl migration to produce 3-hydroxy-3-methyl-2-ketobutyrate (HMKB). In the reductase reaction, this 2-ketoacid undergoes a metal-dependent reduction by NADPH to yield (R)-2,3-dihydroxy-isovalerate. This is Ketol-acid reductoisomerase (NADP(+)) from Xylella fastidiosa (strain Temecula1 / ATCC 700964).